The following is a 417-amino-acid chain: UDP-N-acetylmuramoylalanine--D-glutamate ligase (417 aa).

104–110 (GSNGKST) provides a ligand contact to ATP.

It belongs to the MurCDEF family.

It is found in the cytoplasm. The catalysed reaction is UDP-N-acetyl-alpha-D-muramoyl-L-alanine + D-glutamate + ATP = UDP-N-acetyl-alpha-D-muramoyl-L-alanyl-D-glutamate + ADP + phosphate + H(+). It functions in the pathway cell wall biogenesis; peptidoglycan biosynthesis. Functionally, cell wall formation. Catalyzes the addition of glutamate to the nucleotide precursor UDP-N-acetylmuramoyl-L-alanine (UMA). This chain is UDP-N-acetylmuramoylalanine--D-glutamate ligase, found in Francisella tularensis subsp. novicida (strain U112).